Consider the following 563-residue polypeptide: Arginine--tRNA ligase (563 aa).

Residues 121–131 (PNIAKPMSMGH) carry the 'HIGH' region motif.

This sequence belongs to the class-I aminoacyl-tRNA synthetase family. In terms of assembly, monomer.

The protein resides in the cytoplasm. The catalysed reaction is tRNA(Arg) + L-arginine + ATP = L-arginyl-tRNA(Arg) + AMP + diphosphate. This chain is Arginine--tRNA ligase, found in Leuconostoc citreum (strain KM20).